A 435-amino-acid chain; its full sequence is Citrate synthase (435 aa).

Residues His-311 and Asp-370 contribute to the active site.

This sequence belongs to the citrate synthase family.

The catalysed reaction is oxaloacetate + acetyl-CoA + H2O = citrate + CoA + H(+). It participates in carbohydrate metabolism; tricarboxylic acid cycle; isocitrate from oxaloacetate: step 1/2. The chain is Citrate synthase (gltA) from Rickettsia slovaca (strain 13-B).